Reading from the N-terminus, the 236-residue chain is Purine nucleoside phosphorylase DeoD-type (236 aa).

An a purine D-ribonucleoside-binding site is contributed by His5. Phosphate is bound by residues Gly21, Arg25, Arg44, and Arg88 to Thr91. A purine D-ribonucleoside contacts are provided by residues Glu180–Glu182 and Ser204–Asp205. Asp205 functions as the Proton donor in the catalytic mechanism.

This sequence belongs to the PNP/UDP phosphorylase family. In terms of assembly, homohexamer; trimer of homodimers.

It catalyses the reaction a purine D-ribonucleoside + phosphate = a purine nucleobase + alpha-D-ribose 1-phosphate. The enzyme catalyses a purine 2'-deoxy-D-ribonucleoside + phosphate = a purine nucleobase + 2-deoxy-alpha-D-ribose 1-phosphate. Its function is as follows. Catalyzes the reversible phosphorolytic breakdown of the N-glycosidic bond in the beta-(deoxy)ribonucleoside molecules, with the formation of the corresponding free purine bases and pentose-1-phosphate. In Shewanella loihica (strain ATCC BAA-1088 / PV-4), this protein is Purine nucleoside phosphorylase DeoD-type.